The primary structure comprises 429 residues: 3-phosphoshikimate 1-carboxyvinyltransferase (429 aa).

3-phosphoshikimate contacts are provided by K21, S22, and R26. K21 lines the phosphoenolpyruvate pocket. Phosphoenolpyruvate-binding residues include G94 and R122. Residues S167, Q169, D315, and K342 each contribute to the 3-phosphoshikimate site. Residue Q169 coordinates phosphoenolpyruvate. D315 serves as the catalytic Proton acceptor. Phosphoenolpyruvate is bound by residues R346 and R388.

Belongs to the EPSP synthase family. Monomer.

The protein localises to the cytoplasm. The catalysed reaction is 3-phosphoshikimate + phosphoenolpyruvate = 5-O-(1-carboxyvinyl)-3-phosphoshikimate + phosphate. It participates in metabolic intermediate biosynthesis; chorismate biosynthesis; chorismate from D-erythrose 4-phosphate and phosphoenolpyruvate: step 6/7. In terms of biological role, catalyzes the transfer of the enolpyruvyl moiety of phosphoenolpyruvate (PEP) to the 5-hydroxyl of shikimate-3-phosphate (S3P) to produce enolpyruvyl shikimate-3-phosphate and inorganic phosphate. This Desulforudis audaxviator (strain MP104C) protein is 3-phosphoshikimate 1-carboxyvinyltransferase.